Here is a 68-residue protein sequence, read N- to C-terminus: Antimicrobial peptide Eval418 (68 aa).

Positions M1–A23 are cleaved as a signal peptide. I36 is subject to Isoleucine amide. Positions G37–R68 are excised as a propeptide.

Belongs to the non-disulfide-bridged peptide (NDBP) superfamily. Short antimicrobial peptide (group 4) family. As to expression, expressed by the venom gland.

Its subcellular location is the secreted. Probable antimicrobial peptide. Shows dose-dependent and time-dependent inactivation of herpes simplex virus type 1 (HSV-1) and dose-dependent inhibition of HSV-1 viral attachment to host cells. Scarcely suppress an established HSV-1 infection due to poor cellular uptake. This chain is Antimicrobial peptide Eval418, found in Euscorpiops validus (Scorpion).